The sequence spans 413 residues: Serine hydroxymethyltransferase (413 aa).

(6S)-5,6,7,8-tetrahydrofolate is bound by residues Leu119 and 123–125 (GHL). Lys228 is modified (N6-(pyridoxal phosphate)lysine).

The protein belongs to the SHMT family. As to quaternary structure, homodimer. Requires pyridoxal 5'-phosphate as cofactor.

The protein localises to the cytoplasm. The enzyme catalyses (6R)-5,10-methylene-5,6,7,8-tetrahydrofolate + glycine + H2O = (6S)-5,6,7,8-tetrahydrofolate + L-serine. The protein operates within one-carbon metabolism; tetrahydrofolate interconversion. Its pathway is amino-acid biosynthesis; glycine biosynthesis; glycine from L-serine: step 1/1. Its function is as follows. Catalyzes the reversible interconversion of serine and glycine with tetrahydrofolate (THF) serving as the one-carbon carrier. This reaction serves as the major source of one-carbon groups required for the biosynthesis of purines, thymidylate, methionine, and other important biomolecules. Also exhibits THF-independent aldolase activity toward beta-hydroxyamino acids, producing glycine and aldehydes, via a retro-aldol mechanism. The sequence is that of Serine hydroxymethyltransferase from Caldanaerobacter subterraneus subsp. tengcongensis (strain DSM 15242 / JCM 11007 / NBRC 100824 / MB4) (Thermoanaerobacter tengcongensis).